We begin with the raw amino-acid sequence, 677 residues long: Methionine--tRNA ligase (677 aa).

The short motif at 15–25 (PYANGSIHLGH) is the 'HIGH' region element. Zn(2+) is bound by residues Cys-146, Cys-149, Cys-159, and Cys-162. The short motif at 333-337 (KMSKS) is the 'KMSKS' region element. Residue Lys-336 participates in ATP binding. A tRNA-binding domain is found at 576–677 (DFAKIDLRVA…EGAKPGMRVK (102 aa)).

It belongs to the class-I aminoacyl-tRNA synthetase family. MetG type 1 subfamily. In terms of assembly, homodimer. Zn(2+) is required as a cofactor.

The protein resides in the cytoplasm. It catalyses the reaction tRNA(Met) + L-methionine + ATP = L-methionyl-tRNA(Met) + AMP + diphosphate. Its function is as follows. Is required not only for elongation of protein synthesis but also for the initiation of all mRNA translation through initiator tRNA(fMet) aminoacylation. The protein is Methionine--tRNA ligase of Aeromonas hydrophila subsp. hydrophila (strain ATCC 7966 / DSM 30187 / BCRC 13018 / CCUG 14551 / JCM 1027 / KCTC 2358 / NCIMB 9240 / NCTC 8049).